The chain runs to 719 residues: Photosystem I P700 chlorophyll a apoprotein A1 (719 aa).

Helical transmembrane passes span 59–82, 145–168, 184–208, 280–298, 335–358, 374–400, 422–444, and 520–538; these read VFSA…FHGA, LYCT…FHYH, LNHH…HVSL, TAHH…GHMY, WHAQ…HHMY, LSLF…IFMV, AIVS…LYIH, and FLVH…LILL. Residues cysteine 562 and cysteine 571 each coordinate [4Fe-4S] cluster. A run of 2 helical transmembrane segments spans residues 578–599 and 653–675; these read HVFL…HFSW and LSAY…MFLF. Histidine 664 is a chlorophyll a' binding site. The chlorophyll a site is built by methionine 672 and tyrosine 680. Residue tryptophan 681 coordinates phylloquinone. Residues 713–719 form a helical membrane-spanning segment; it reads AVGVAHY.

It belongs to the PsaA/PsaB family. The PsaA/B heterodimer binds the P700 chlorophyll special pair and subsequent electron acceptors. PSI consists of a core antenna complex that captures photons, and an electron transfer chain that converts photonic excitation into a charge separation. The eukaryotic PSI reaction center is composed of at least 11 subunits. P700 is a chlorophyll a/chlorophyll a' dimer, A0 is one or more chlorophyll a, A1 is one or both phylloquinones and FX is a shared 4Fe-4S iron-sulfur center. serves as cofactor.

It localises to the plastid. It is found in the chloroplast thylakoid membrane. The catalysed reaction is reduced [plastocyanin] + hnu + oxidized [2Fe-2S]-[ferredoxin] = oxidized [plastocyanin] + reduced [2Fe-2S]-[ferredoxin]. Its function is as follows. PsaA and PsaB bind P700, the primary electron donor of photosystem I (PSI), as well as the electron acceptors A0, A1 and FX. PSI is a plastocyanin-ferredoxin oxidoreductase, converting photonic excitation into a charge separation, which transfers an electron from the donor P700 chlorophyll pair to the spectroscopically characterized acceptors A0, A1, FX, FA and FB in turn. Oxidized P700 is reduced on the lumenal side of the thylakoid membrane by plastocyanin. This chain is Photosystem I P700 chlorophyll a apoprotein A1, found in Encephalartos lebomboensis (Lebombo cycad).